The sequence spans 69 residues: Large ribosomal subunit protein bL31 (69 aa).

It belongs to the bacterial ribosomal protein bL31 family. Type A subfamily. Part of the 50S ribosomal subunit.

Binds the 23S rRNA. The chain is Large ribosomal subunit protein bL31 from Mycoplasmopsis pulmonis (strain UAB CTIP) (Mycoplasma pulmonis).